Reading from the N-terminus, the 279-residue chain is Pantothenate synthetase (279 aa).

26–33 (MGALHSGH) contributes to the ATP binding site. The active-site Proton donor is His-33. Gln-57 is a binding site for (R)-pantoate. Gln-57 is a binding site for beta-alanine. 147–150 (GQKD) is a binding site for ATP. Gln-153 is a binding site for (R)-pantoate. Residues Ile-176 and 184-187 (ESSR) each bind ATP.

The protein belongs to the pantothenate synthetase family. As to quaternary structure, homodimer.

The protein localises to the cytoplasm. It catalyses the reaction (R)-pantoate + beta-alanine + ATP = (R)-pantothenate + AMP + diphosphate + H(+). The protein operates within cofactor biosynthesis; (R)-pantothenate biosynthesis; (R)-pantothenate from (R)-pantoate and beta-alanine: step 1/1. Catalyzes the condensation of pantoate with beta-alanine in an ATP-dependent reaction via a pantoyl-adenylate intermediate. In Corynebacterium glutamicum (strain R), this protein is Pantothenate synthetase.